The following is a 183-amino-acid chain: MAAISMACVSSQCLSISSKLHNLSFSSTQFPNSSLKPLTFSANLSQPLFSQGCSSLGSFQRRGFSVVCEVATLKKADSAAKRTRQAETRRLRNKARKSEVKTRMRKVFEALDALKKKSGASTEELVPIDNLIAEAYSAIDKAVVKGTLHRNTAARRKSRLARNKKVVEIHHGWYTPSLAPTNV.

The transit peptide at 1–68 (MAAISMACVS…FQRRGFSVVC (68 aa)) directs the protein to the chloroplast. Residues 79–99 (AAKRTRQAETRRLRNKARKSE) form a disordered region.

Component of the chloroplast small ribosomal subunit (SSU). Mature 70S chloroplast ribosomes of higher plants consist of a small (30S) and a large (50S) subunit. The 30S small subunit contains 1 molecule of ribosomal RNA (16S rRNA) and 24 different proteins. The 50S large subunit contains 3 rRNA molecules (23S, 5S and 4.5S rRNA) and 33 different proteins.

The protein localises to the plastid. It localises to the chloroplast. In terms of biological role, component of the chloroplast ribosome (chloro-ribosome), a dedicated translation machinery responsible for the synthesis of chloroplast genome-encoded proteins, including proteins of the transcription and translation machinery and components of the photosynthetic apparatus. The protein is Small ribosomal subunit protein bS20c (RPS20) of Spinacia oleracea (Spinach).